A 240-amino-acid polypeptide reads, in one-letter code: Ribonuclease 3 (240 aa).

One can recognise an RNase III domain in the interval 4–134 (SRQPLLDALG…LLGAIYLQHG (131 aa)). Glutamate 44 contributes to the Mg(2+) binding site. Aspartate 48 is a catalytic residue. Aspartate 120 and glutamate 123 together coordinate Mg(2+). The active site involves glutamate 123. One can recognise a DRBM domain in the interval 161-229 (DWKTSLQELT…AAAAWKALEV (69 aa)).

This sequence belongs to the ribonuclease III family. As to quaternary structure, homodimer. Requires Mg(2+) as cofactor.

The protein resides in the cytoplasm. The catalysed reaction is Endonucleolytic cleavage to 5'-phosphomonoester.. Digests double-stranded RNA. Involved in the processing of primary rRNA transcript to yield the immediate precursors to the large and small rRNAs (23S and 16S). Processes some mRNAs, and tRNAs when they are encoded in the rRNA operon. Processes pre-crRNA and tracrRNA of type II CRISPR loci if present in the organism. This is Ribonuclease 3 from Mycobacterium bovis (strain ATCC BAA-935 / AF2122/97).